The primary structure comprises 265 residues: Small ribosomal subunit protein uS2 (265 aa).

It belongs to the universal ribosomal protein uS2 family.

The polypeptide is Small ribosomal subunit protein uS2 (Gluconobacter oxydans (strain 621H) (Gluconobacter suboxydans)).